The following is a 105-amino-acid chain: MRALGHLKHKAFRDLLCRRLFAEHEVERQSNLYIYRNPELPLRVRLEAKKRIEALPTNAHPTKIKNRCIETGRGRGVFRAFGLARFPFRLKALANKLPGVRKASW.

Belongs to the universal ribosomal protein uS14 family. In terms of assembly, component of the mitochondrial small ribosomal subunit (mt-SSU). Mature yeast 74S mitochondrial ribosomes consist of a small (37S) and a large (54S) subunit. The 37S small subunit contains a 15S ribosomal RNA (15S mt-rRNA) and at least 32 different proteins. The 54S large subunit contains a 21S rRNA (21S mt-rRNA) and at least 45 different proteins.

It localises to the mitochondrion. In terms of biological role, component of the mitochondrial ribosome (mitoribosome), a dedicated translation machinery responsible for the synthesis of mitochondrial genome-encoded proteins, including at least some of the essential transmembrane subunits of the mitochondrial respiratory chain. The mitoribosomes are attached to the mitochondrial inner membrane and translation products are cotranslationally integrated into the membrane. This chain is Small ribosomal subunit protein uS14m (mrp2), found in Schizosaccharomyces pombe (strain 972 / ATCC 24843) (Fission yeast).